The sequence spans 411 residues: Epoxyqueuosine reductase (411 aa).

D171 serves as the catalytic Proton donor. The 4Fe-4S ferredoxin-type domain maps to 213 to 245; it reads LPLPVDKPQEEQCGRCVACMTTCPTGAIVAPYT. [4Fe-4S] cluster is bound by residues C225, C228, C231, C235, C251, C278, C281, and C285.

It belongs to the QueG family. Monomer. Cob(II)alamin serves as cofactor. The cofactor is [4Fe-4S] cluster.

The protein localises to the cytoplasm. It catalyses the reaction epoxyqueuosine(34) in tRNA + AH2 = queuosine(34) in tRNA + A + H2O. The protein operates within tRNA modification; tRNA-queuosine biosynthesis. Functionally, catalyzes the conversion of epoxyqueuosine (oQ) to queuosine (Q), which is a hypermodified base found in the wobble positions of tRNA(Asp), tRNA(Asn), tRNA(His) and tRNA(Tyr). In Yersinia pestis, this protein is Epoxyqueuosine reductase.